A 100-amino-acid polypeptide reads, in one-letter code: Small ubiquitin-related modifier 1 (100 aa).

Over residues 1–12 (MSANQEEDKKPG) the composition is skewed to basic and acidic residues. The segment at 1 to 21 (MSANQEEDKKPGDGGAHINLK) is disordered. The region spanning 16–93 (AHINLKVKGQ…IDAMLHQTGG (78 aa)) is the Ubiquitin-like domain. Gly-93 is covalently cross-linked (Glycyl lysine isopeptide (Gly-Lys) (interchain with K-? in acceptor proteins)).

This sequence belongs to the ubiquitin family. SUMO subfamily. Interacts with SAE2, SCE1, SIZ1 and MMS21. Interacts with HSFA2. Covalently attached to ABI5, FLD, GTE3, HSFA2 and ICE1.

The protein resides in the nucleus. It localises to the cytoplasm. In terms of biological role, ubiquitin-like protein which can be covalently attached to target lysines as a monomer. Does not seem to be involved in protein degradation and may function as an antagonist of ubiquitin in the degradation process. Required for the massive protein sumoylation in the nucleus induced by heat shock and controlled by SIZ1. Involved in the regulation of the heat stress transcription factor HSFA2 in acquired thermotolerance. The protein is Small ubiquitin-related modifier 1 of Arabidopsis thaliana (Mouse-ear cress).